Consider the following 77-residue polypeptide: Large ribosomal subunit protein uL29 (77 aa).

It belongs to the universal ribosomal protein uL29 family.

The polypeptide is Large ribosomal subunit protein uL29 (Mycolicibacterium vanbaalenii (strain DSM 7251 / JCM 13017 / BCRC 16820 / KCTC 9966 / NRRL B-24157 / PYR-1) (Mycobacterium vanbaalenii)).